The sequence spans 267 residues: Syntaxin-72 (267 aa).

The Cytoplasmic segment spans residues 1-244 (MPVIDIIFRV…QLVQMRSSRN (244 aa)). A coiled-coil region spans residues 53-87 (KAELASTEKNRAAAVAMNAEVRRTKARLAEDVVKL). A t-SNARE coiled-coil homology domain is found at 173–235 (EMRRKKQDEG…KNTNVRLKKQ (63 aa)). The chain crosses the membrane as a helical; Anchor for type IV membrane protein span at residues 245–265 (FCIDIILLCVILGIVSYIYNA). Over 266-267 (LN) the chain is Vesicular.

Belongs to the syntaxin family. As to quaternary structure, part of the t-SNARE complex. Expressed in root, leaf, stem, flower and silique.

The protein resides in the membrane. Functionally, vesicle trafficking protein that functions in the secretory pathway. This Arabidopsis thaliana (Mouse-ear cress) protein is Syntaxin-72 (SYP72).